The sequence spans 407 residues: Probable 2,3-bisphosphoglycerate-independent phosphoglycerate mutase (407 aa).

Residues 175–200 form a disordered region; it reads GSDAINDTDPQQVGKEPLEPKGENPN.

It belongs to the BPG-independent phosphoglycerate mutase family. A-PGAM subfamily.

It catalyses the reaction (2R)-2-phosphoglycerate = (2R)-3-phosphoglycerate. It functions in the pathway carbohydrate degradation; glycolysis; pyruvate from D-glyceraldehyde 3-phosphate: step 3/5. Catalyzes the interconversion of 2-phosphoglycerate and 3-phosphoglycerate. The polypeptide is Probable 2,3-bisphosphoglycerate-independent phosphoglycerate mutase (Aquifex aeolicus (strain VF5)).